Here is a 409-residue protein sequence, read N- to C-terminus: Glucan endo-1,6-beta-glucosidase B (409 aa).

The signal sequence occupies residues 1–16; sequence MKFILPLFTSLPVALA. Asn35 carries an N-linked (GlcNAc...) asparagine glycan. The active-site Proton donor is Glu228. Glu330 serves as the catalytic Nucleophile.

It belongs to the glycosyl hydrolase 5 (cellulase A) family.

It localises to the secreted. The enzyme catalyses Random hydrolysis of (1-&gt;6)-linkages in (1-&gt;6)-beta-D-glucans.. Its function is as follows. Beta-glucanases participate in the metabolism of beta-glucan, the main structural component of the cell wall. Acts on lutean, pustulan and 1,6-oligo-beta-D-glucosides. The polypeptide is Glucan endo-1,6-beta-glucosidase B (exgB) (Emericella nidulans (strain FGSC A4 / ATCC 38163 / CBS 112.46 / NRRL 194 / M139) (Aspergillus nidulans)).